The chain runs to 530 residues: Ubiquitin carboxyl-terminal hydrolase 17-like protein 20 (530 aa).

A USP domain is found at A80 to K375. The Nucleophile role is filled by C89. The active-site Proton acceptor is the H334. Basic and acidic residues-rich tracts occupy residues S382–R392 and D398–P413. Disordered stretches follow at residues S382–P413 and R509–Q530. Basic residues predominate over residues G510–R524.

The protein belongs to the peptidase C19 family. USP17 subfamily.

The protein resides in the nucleus. The protein localises to the endoplasmic reticulum. The catalysed reaction is Thiol-dependent hydrolysis of ester, thioester, amide, peptide and isopeptide bonds formed by the C-terminal Gly of ubiquitin (a 76-residue protein attached to proteins as an intracellular targeting signal).. Functionally, deubiquitinating enzyme that removes conjugated ubiquitin from specific proteins to regulate different cellular processes that may include cell proliferation, progression through the cell cycle, apoptosis, cell migration, and the cellular response to viral infection. This is Ubiquitin carboxyl-terminal hydrolase 17-like protein 20 (USP17L20) from Homo sapiens (Human).